Consider the following 320-residue polypeptide: Mechanosensory protein 3 (320 aa).

2 LIM zinc-binding domains span residues 29–79 (CNCC…CSQH) and 89–145 (CAGC…CMTH). Positions 216–275 (RRGPRTTIKQNQLDVLNEMFSNTPKPSKHARAKKALETGLSMRVIQVWFQNRRSKERRLK) form a DNA-binding region, homeobox.

The protein resides in the nucleus. Specifies differentiation of the set of six touch receptor neurons. Binds cooperatively as a heterodimer with unc-86 to sites in the mec-3 gene promoter. The sequence is that of Mechanosensory protein 3 (mec-3) from Caenorhabditis remanei (Caenorhabditis vulgaris).